Consider the following 413-residue polypeptide: Glutaminase (413 aa).

Residues 23 to 307 form a glutaminase region; sequence GELADYIPEL…LSDDMGLHLM (285 aa). Residues S65, N114, E160, N167, Y191, Y243, and V261 each coordinate substrate. Residues 316-413 form the STAS domain; the sequence is AVRSITRDGD…SDGTICKERV (98 aa).

Belongs to the glutaminase family. As to quaternary structure, homotetramer.

The catalysed reaction is L-glutamine + H2O = L-glutamate + NH4(+). This chain is Glutaminase (glsA), found in Corynebacterium glutamicum (strain ATCC 13032 / DSM 20300 / JCM 1318 / BCRC 11384 / CCUG 27702 / LMG 3730 / NBRC 12168 / NCIMB 10025 / NRRL B-2784 / 534).